We begin with the raw amino-acid sequence, 226 residues long: MLLHIPGLFDADELARIREALERADWADGKVTAGYQSAKAKHNLQLPEGHALAKEIGTALIDRLWKTPRFMSAALPHKVFPPLINCYRDGGNFGFHIDNALRQPKGSPERVRTDLSSTLFLSDPESYDGGELVIQDTYGVQQIKLAAGDMVLYPGTSLHKVNPVTRGQRYAAFFWTQSLVRDDSQRALLFEMDNAIQQLTADVPDHPSLLQLTGTYHNLLRRWAEV.

The region spanning 78–178 is the Fe2OG dioxygenase domain; it reads KVFPPLINCY…RYAAFFWTQS (101 aa). His-96, Asp-98, and His-159 together coordinate Fe cation. A 2-oxoglutarate-binding site is contributed by Arg-169.

The cofactor is Fe(2+). Requires L-ascorbate as cofactor.

The protein is PKHD-type hydroxylase PP_0862 of Pseudomonas putida (strain ATCC 47054 / DSM 6125 / CFBP 8728 / NCIMB 11950 / KT2440).